A 619-amino-acid polypeptide reads, in one-letter code: Dihydroxy-acid dehydratase (619 aa).

Residue Asp-81 coordinates Mg(2+). Position 122 (Cys-122) interacts with [2Fe-2S] cluster. 2 residues coordinate Mg(2+): Asp-123 and Lys-124. Lys-124 is modified (N6-carboxylysine). A [2Fe-2S] cluster-binding site is contributed by Cys-195. A Mg(2+)-binding site is contributed by Glu-494. The active-site Proton acceptor is Ser-520.

Belongs to the IlvD/Edd family. As to quaternary structure, homodimer. [2Fe-2S] cluster serves as cofactor. Requires Mg(2+) as cofactor.

The catalysed reaction is (2R)-2,3-dihydroxy-3-methylbutanoate = 3-methyl-2-oxobutanoate + H2O. The enzyme catalyses (2R,3R)-2,3-dihydroxy-3-methylpentanoate = (S)-3-methyl-2-oxopentanoate + H2O. It participates in amino-acid biosynthesis; L-isoleucine biosynthesis; L-isoleucine from 2-oxobutanoate: step 3/4. Its pathway is amino-acid biosynthesis; L-valine biosynthesis; L-valine from pyruvate: step 3/4. Its function is as follows. Functions in the biosynthesis of branched-chain amino acids. Catalyzes the dehydration of (2R,3R)-2,3-dihydroxy-3-methylpentanoate (2,3-dihydroxy-3-methylvalerate) into 2-oxo-3-methylpentanoate (2-oxo-3-methylvalerate) and of (2R)-2,3-dihydroxy-3-methylbutanoate (2,3-dihydroxyisovalerate) into 2-oxo-3-methylbutanoate (2-oxoisovalerate), the penultimate precursor to L-isoleucine and L-valine, respectively. This Shewanella oneidensis (strain ATCC 700550 / JCM 31522 / CIP 106686 / LMG 19005 / NCIMB 14063 / MR-1) protein is Dihydroxy-acid dehydratase.